A 525-amino-acid chain; its full sequence is Vesicular inhibitory amino acid transporter (525 aa).

Residues 1 to 132 (MATLLRSKLT…WNVTNAIQGM (132 aa)) lie on the Cytoplasmic side of the membrane. A helical membrane pass occupies residues 133–153 (FVLGLPYAILHGGYLGLFLII). The Lumenal, vesicle portion of the chain corresponds to 154–204 (FAAVVCCYTGKILIACLYEENEDGEVVRVRDSYVAIANACCAPRFPTLGGR). A 3'-nitrotyrosine modification is found at Y186. A helical membrane pass occupies residues 205 to 225 (VVNVAQIIELVMTCILYVVVS). Residues 226–265 (GNLMYNSFPGLPVSQKSWSIIATAVLLPCAFLKNLKAVSK) are Cytoplasmic-facing. A helical transmembrane segment spans residues 266–286 (FSLLCTLAHFVINILVIAYCL). Over 287–305 (SRARDWAWEKVKFYIDVKK) the chain is Lumenal, vesicle. A helical transmembrane segment spans residues 306-326 (FPISIGIIVFSYTSQIFLPSL). The Cytoplasmic portion of the chain corresponds to 327-341 (EGNMQQPSEFHCMMN). The helical transmembrane segment at 342-362 (WTHIAACVLKGLFALVAYLTW) threads the bilayer. At 363-383 (ADETKEVITDNLPGSIRAVVN) the chain is on the lumenal, vesicle side. A helical transmembrane segment spans residues 384-404 (IFLVAKALLSYPLPFFAAVEV). The Cytoplasmic segment spans residues 405–438 (LEKSLFQEGSRAFFPACYGGDGRLKSWGLTLRCA). The chain crosses the membrane as a helical span at residues 439–459 (LVVFTLLMAIYVPHFALLMGL). Residues 460-461 (TG) lie on the Lumenal, vesicle side of the membrane. A helical membrane pass occupies residues 462–482 (SLTGAGLCFLLPSLFHLRLLW). The Cytoplasmic segment spans residues 483–489 (RKLLWHQ). A helical transmembrane segment spans residues 490–510 (VFFDVAIFVIGGICSVSGFVH). Residues 511-525 (SLEGLIEAYRTNAED) are Lumenal, vesicle-facing.

This sequence belongs to the amino acid/polyamine transporter 2 family. As to expression, brain. Expressed at high levels within the neocortex, hippocampus, cerebellum, striatum, septal nuclei and the reticular nucleus of the thalamus. Also expressed in islets where it is more abundant in the peripheral/mantle region. Highly expressed in the nerve endings of GABA neurons in the brain and spinal cord but also in glycinergic nerve endings. Expressed in glycine-, GABA- or GABA- and glycine-containing boutons.

The protein resides in the cytoplasmic vesicle. It localises to the secretory vesicle. It is found in the synaptic vesicle membrane. Its subcellular location is the presynapse. It carries out the reaction beta-alanine(out) + n H(+)(in) = beta-alanine(in) + n H(+)(out). It catalyses the reaction 4-aminobutanoate(out) + n H(+)(in) = 4-aminobutanoate(in) + n H(+)(out). The catalysed reaction is glycine(out) + n H(+)(in) = glycine(in) + n H(+)(out). Functionally, antiporter that exchanges vesicular protons for cytosolic 4-aminobutanoate or to a lesser extend glycine, thus allowing their secretion from nerve terminals. The transport is equally dependent on the chemical and electrical components of the proton gradient. May also transport beta-alanine. Acidification of GABAergic synaptic vesicles is a prerequisite for 4-aminobutanoate uptake. This Rattus norvegicus (Rat) protein is Vesicular inhibitory amino acid transporter.